A 292-amino-acid polypeptide reads, in one-letter code: Ribosomal protein L11 methyltransferase (292 aa).

S-adenosyl-L-methionine is bound by residues T145, G166, D188, and N229.

This sequence belongs to the methyltransferase superfamily. PrmA family.

The protein resides in the cytoplasm. The catalysed reaction is L-lysyl-[protein] + 3 S-adenosyl-L-methionine = N(6),N(6),N(6)-trimethyl-L-lysyl-[protein] + 3 S-adenosyl-L-homocysteine + 3 H(+). In terms of biological role, methylates ribosomal protein L11. This is Ribosomal protein L11 methyltransferase from Nitrosococcus oceani (strain ATCC 19707 / BCRC 17464 / JCM 30415 / NCIMB 11848 / C-107).